The chain runs to 366 residues: Geranylgeranyl pyrophosphate synthase, chloroplastic/chromoplastic (366 aa).

The disordered stretch occupies residues 44–65 (KRTVSSSSSSSLITKEDNNLKS). Positions 112, 115, and 144 each coordinate isopentenyl diphosphate. 2 residues coordinate Mg(2+): aspartate 151 and aspartate 157. Residue arginine 162 coordinates dimethylallyl diphosphate. Position 163 (arginine 163) interacts with isopentenyl diphosphate. Positions 251, 252, 289, 306, and 316 each coordinate dimethylallyl diphosphate.

It belongs to the FPP/GGPP synthase family. In terms of assembly, dimer. Mg(2+) is required as a cofactor.

The protein resides in the plastid. Its subcellular location is the chloroplast stroma. It localises to the chromoplast. The catalysed reaction is isopentenyl diphosphate + dimethylallyl diphosphate = (2E)-geranyl diphosphate + diphosphate. The enzyme catalyses isopentenyl diphosphate + (2E)-geranyl diphosphate = (2E,6E)-farnesyl diphosphate + diphosphate. It catalyses the reaction isopentenyl diphosphate + (2E,6E)-farnesyl diphosphate = (2E,6E,10E)-geranylgeranyl diphosphate + diphosphate. The protein operates within isoprenoid biosynthesis; farnesyl diphosphate biosynthesis; farnesyl diphosphate from geranyl diphosphate and isopentenyl diphosphate: step 1/1. Its pathway is isoprenoid biosynthesis; geranyl diphosphate biosynthesis; geranyl diphosphate from dimethylallyl diphosphate and isopentenyl diphosphate: step 1/1. It functions in the pathway isoprenoid biosynthesis; geranylgeranyl diphosphate biosynthesis; geranylgeranyl diphosphate from farnesyl diphosphate and isopentenyl diphosphate: step 1/1. Catalyzes the trans-addition of the three molecules of IPP onto DMAPP to form geranylgeranyl pyrophosphate. The sequence is that of Geranylgeranyl pyrophosphate synthase, chloroplastic/chromoplastic (GGPS1) from Sinapis alba (White mustard).